The chain runs to 290 residues: Syntaxin-2 (290 aa).

Over 1–266 (MRDRLPDLTA…KYQSKARRKK (266 aa)) the chain is Cytoplasmic. Ser14 is subject to Phosphoserine. Positions 69-106 (EGKIKEELEDLNKEIKKTANRIRGKLKAIEQSCDQDEN) form a coiled coil. One can recognise a t-SNARE coiled-coil homology domain in the interval 193–255 (LNEIESRHKD…EHAKEETKKA (63 aa)). Residues 267–290 (WIIAAVVVAVIAVLALIIGLTVGK) traverse the membrane as a helical; Anchor for type IV membrane protein segment.

Belongs to the syntaxin family. Interacts with SYT6 and SYT8; the interaction is Ca(2+)-dependent. Heart, spleen, liver, and testis.

It is found in the membrane. Its function is as follows. Essential for epithelial morphogenesis. May mediate Ca(2+)-regulation of exocytosis acrosomal reaction in sperm. This Rattus norvegicus (Rat) protein is Syntaxin-2 (Stx2).